The sequence spans 449 residues: XK-related protein 2 (449 aa).

The next 10 helical transmembrane spans lie at 35 to 55 (FSIL…LYMV), 68 to 88 (TYTF…LIFV), 98 to 118 (LSLF…EAMI), 174 to 194 (IQAF…SLIS), 202 to 222 (VVLM…CNML), 241 to 261 (LCIT…LVLF), 269 to 289 (AVPF…IKFW), 306 to 326 (VGTL…NFSC), 357 to 377 (LVEN…VLLN), and 382 to 402 (LIAL…LLFF).

The protein belongs to the XK family. Expressed predominantly in the placenta, in syncytiotrophoblasts. Moderate levels in the adrenal gland, low levels in the trachea and very low levels in the bone marrow.

It is found in the cell membrane. This chain is XK-related protein 2 (XKRX), found in Homo sapiens (Human).